The chain runs to 110 residues: Cytochrome c oxidase subunit 4B (110 aa).

A run of 3 helical transmembrane segments spans residues 29-49 (MIAF…VGYE), 55-75 (FVVP…LYYF), and 89-109 (FIYG…TVVW).

It belongs to the cytochrome c oxidase bacterial subunit 4 family.

Its subcellular location is the cell membrane. It carries out the reaction 4 Fe(II)-[cytochrome c] + O2 + 8 H(+)(in) = 4 Fe(III)-[cytochrome c] + 2 H2O + 4 H(+)(out). The polypeptide is Cytochrome c oxidase subunit 4B (caaD) (Bacillus sp. (strain PS3)).